The primary structure comprises 433 residues: Serine--tRNA ligase (433 aa).

Residue 235-237 participates in L-serine binding; that stretch reads TSE. An ATP-binding site is contributed by 266-268; it reads RSE. An L-serine-binding site is contributed by Glu289. 353-356 lines the ATP pocket; sequence EISS. Ser388 lines the L-serine pocket.

It belongs to the class-II aminoacyl-tRNA synthetase family. Type-1 seryl-tRNA synthetase subfamily. In terms of assembly, homodimer. The tRNA molecule binds across the dimer.

It localises to the cytoplasm. The enzyme catalyses tRNA(Ser) + L-serine + ATP = L-seryl-tRNA(Ser) + AMP + diphosphate + H(+). It catalyses the reaction tRNA(Sec) + L-serine + ATP = L-seryl-tRNA(Sec) + AMP + diphosphate + H(+). It functions in the pathway aminoacyl-tRNA biosynthesis; selenocysteinyl-tRNA(Sec) biosynthesis; L-seryl-tRNA(Sec) from L-serine and tRNA(Sec): step 1/1. In terms of biological role, catalyzes the attachment of serine to tRNA(Ser). Is also able to aminoacylate tRNA(Sec) with serine, to form the misacylated tRNA L-seryl-tRNA(Sec), which will be further converted into selenocysteinyl-tRNA(Sec). This chain is Serine--tRNA ligase, found in Burkholderia vietnamiensis (strain G4 / LMG 22486) (Burkholderia cepacia (strain R1808)).